Consider the following 344-residue polypeptide: UDP-3-O-acylglucosamine N-acyltransferase (344 aa).

Catalysis depends on H248, which acts as the Proton acceptor.

Belongs to the transferase hexapeptide repeat family. LpxD subfamily. In terms of assembly, homotrimer.

It catalyses the reaction a UDP-3-O-[(3R)-3-hydroxyacyl]-alpha-D-glucosamine + a (3R)-hydroxyacyl-[ACP] = a UDP-2-N,3-O-bis[(3R)-3-hydroxyacyl]-alpha-D-glucosamine + holo-[ACP] + H(+). It participates in bacterial outer membrane biogenesis; LPS lipid A biosynthesis. Functionally, catalyzes the N-acylation of UDP-3-O-acylglucosamine using 3-hydroxyacyl-ACP as the acyl donor. Is involved in the biosynthesis of lipid A, a phosphorylated glycolipid that anchors the lipopolysaccharide to the outer membrane of the cell. The sequence is that of UDP-3-O-acylglucosamine N-acyltransferase from Synechocystis sp. (strain ATCC 27184 / PCC 6803 / Kazusa).